Consider the following 260-residue polypeptide: Acetylglutamate kinase (260 aa).

Substrate-binding positions include 46-47 (GG), R68, and N160.

This sequence belongs to the acetylglutamate kinase family. ArgB subfamily.

It is found in the cytoplasm. The enzyme catalyses N-acetyl-L-glutamate + ATP = N-acetyl-L-glutamyl 5-phosphate + ADP. It functions in the pathway amino-acid biosynthesis; L-arginine biosynthesis; N(2)-acetyl-L-ornithine from L-glutamate: step 2/4. Its function is as follows. Catalyzes the ATP-dependent phosphorylation of N-acetyl-L-glutamate. The sequence is that of Acetylglutamate kinase from Shewanella baltica (strain OS223).